A 73-amino-acid chain; its full sequence is Translation initiation factor IF-1 1 (73 aa).

The region spanning 1–72 (MAKEELIEFG…TKGRINFRHK (72 aa)) is the S1-like domain.

The protein belongs to the IF-1 family. As to quaternary structure, component of the 30S ribosomal translation pre-initiation complex which assembles on the 30S ribosome in the order IF-2 and IF-3, IF-1 and N-formylmethionyl-tRNA(fMet); mRNA recruitment can occur at any time during PIC assembly.

It localises to the cytoplasm. In terms of biological role, one of the essential components for the initiation of protein synthesis. Stabilizes the binding of IF-2 and IF-3 on the 30S subunit to which N-formylmethionyl-tRNA(fMet) subsequently binds. Helps modulate mRNA selection, yielding the 30S pre-initiation complex (PIC). Upon addition of the 50S ribosomal subunit IF-1, IF-2 and IF-3 are released leaving the mature 70S translation initiation complex. The protein is Translation initiation factor IF-1 1 of Cupriavidus metallidurans (strain ATCC 43123 / DSM 2839 / NBRC 102507 / CH34) (Ralstonia metallidurans).